Consider the following 547-residue polypeptide: MDEVYLYSDATTSKIARTVTQKLGFSKASSSGTRLHRGYVEEATLEDKPSQTSHIVFVVHGIGQKMDQGRIIKNTAMMREAARKMEEKHFSNHATHVEFLPVEWRSKLTLDGDTVDSITPDKVRGLRDMLNSSAMDIMYYTSPLYRDELVKGLQQELNRLYSLFCSRNPDFEEKGGKVSIVSHSLGCVITYDIMMGWNPGGLYEQLLQKEEELPDERWMSYEERHLLDELYITKRRLREIEDRLHGLKAPSISQTPALKFKVENFFCMGSPLAVFLALRGIRPGNSGSQDHILPREICNRLLNIFHPTDPVAYRLEPLILKHYSNISPVQIHWYNTSNPLPYEHMKPNFLNPAKEPTSVSDSENIAAIPSPVTSPVLSRRHYGESITNIGKASILGAASIGKGLGGMLFSRFGRSSASQPSEPSKDSLEDDKKPSASPSTTTVATQTLPHSGSGFLDSAYFRLQESFFYLPQLLFPENVMQSKDDSLVELEHRIDFELREGLVESRYWSAVTSHTAYWSSLDVALFLLTFMYKHEHDTEAKPSLGSL.

Ser184 is a catalytic residue. Residues 258–533 (LKFKVENFFC…ALFLLTFMYK (276 aa)) enclose the DDHD domain. Ser370 carries the phosphoserine modification. The interval 414 to 448 (RSSASQPSEPSKDSLEDDKKPSASPSTTTVATQTL) is disordered. Residues 423–434 (PSKDSLEDDKKP) show a composition bias toward basic and acidic residues. Residues 435 to 448 (SASPSTTTVATQTL) show a composition bias toward low complexity.

This sequence belongs to the PA-PLA1 family. As to quaternary structure, forms homooligomers and, to a much smaller extent, heterooligomers with DDHD2. Interacts with SEC23A and SEC24C. Predominantly expressed in testis, in round and elongating spermatids, but not in spermatocytes (at protein level). Also expressed in the brain, and at lower levels in other tissues such as thymus and lung (at protein level).

It is found in the cytoplasm. The catalysed reaction is a 1,2-diacyl-sn-glycero-3-phosphate + H2O = a 2-acyl-sn-glycerol 3-phosphate + a fatty acid + H(+). The enzyme catalyses a 1,2-diacyl-sn-glycero-3-phospho-(1D-myo-inositol) + H2O = a 2-acyl-sn-glycero-3-phospho-D-myo-inositol + a fatty acid + H(+). It carries out the reaction 1-octadecanoyl-2-(5Z,8Z,11Z,14Z-eicosatetraenoyl)-sn-glycero-3-phospho-(1D-myo-inositol) + H2O = 2-(5Z,8Z,11Z,14Z-eicosatetraenoyl)-sn-glycero-3-phospho-(1D-myo-inositol) + octadecanoate + H(+). It catalyses the reaction a 1-acyl-2-(5Z,8Z,11Z,14Z-eicosatetraenoyl)-sn-glycero-3-phospho-(1D-myo-inositol) + H2O = 2-(5Z,8Z,11Z,14Z-eicosatetraenoyl)-sn-glycero-3-phospho-(1D-myo-inositol) + a fatty acid + H(+). The catalysed reaction is 1,2-dihexadecanoyl-sn-glycero-3-phospho-(1D-myo-inositol) + H2O = 2-hexadecanoyl-sn-glycero-3-phospho-(1D-myo-inositol) + hexadecanoate + H(+). The enzyme catalyses a 1-acyl-2-(5Z,8Z,11Z,14Z)-eicosatetraenoyl-sn-glycero-3-phosphate + H2O = 2-(5Z,8Z,11Z,14Z-eicosatetraenoyl)-sn-glycero-3-phosphate + a fatty acid + H(+). It carries out the reaction 1-(9Z-octadecenoyl)-2-(7Z,10Z,13Z,16Z,19Z-docosapentaenoyl)-sn-glycero-3-phospho-1D-myo-inositol + H2O = 2-(7Z,10Z,13Z,16Z,19Z-docosapentaenoyl)-sn-glycero-3-phospho-1D-myo-inositol + (9Z)-octadecenoate + H(+). It catalyses the reaction 1-(9Z-octadecenoyl)-2-(5Z,8Z,11Z,14Z-eicosatetraenoyl)-sn-glycero-3-phospho-1D-myo-inositol + H2O = 2-(5Z,8Z,11Z,14Z-eicosatetraenoyl)-sn-glycero-3-phospho-(1D-myo-inositol) + (9Z)-octadecenoate + H(+). The catalysed reaction is 1,2-di-(9Z-octadecenoyl)-sn-glycero-3-phospho-1D-myo-inositol + H2O = 2-(9Z-octadecenoyl)-sn-glycero-3-phospho-1D-myo-inositol + (9Z)-octadecenoate + H(+). The enzyme catalyses 1-(9Z-octadecenoyl)-2-(8Z,11Z,14Z-eicosatrienoyl)-sn-glycero-3-phospho-1D-myo-inositol + H2O = 2-(8Z,11Z,14Z-eicosatrienoyl)-sn-glycero-3-phospho-1D-myo-inositol + (9Z)-octadecenoate + H(+). It carries out the reaction 1,2-di-(9Z-octadecenoyl)-sn-glycero-3-phosphate + H2O = 2-(9Z-octadecenoyl)-sn-glycero-3-phosphate + (9Z)-octadecenoate + H(+). It catalyses the reaction 1-hexadecanoyl-2-(9Z-octadecenoyl)-sn-glycero-3-phosphate + H2O = 2-(9Z-octadecenoyl)-sn-glycero-3-phosphate + hexadecanoate + H(+). The catalysed reaction is 1-hexadecanoyl-2-(9Z-octadecenoyl)-sn-glycero-3-phospho-L-serine + H2O = 2-(9Z-octadecenoyl)-sn-glycero-3-phospho-L-serine + hexadecanoate + H(+). The enzyme catalyses 1,2-di-(5Z,8Z,11Z,14Z)-eicosatetraenoyl-sn-glycero-3-phosphate + H2O = 2-(5Z,8Z,11Z,14Z-eicosatetraenoyl)-sn-glycero-3-phosphate + (5Z,8Z,11Z,14Z)-eicosatetraenoate + H(+). It carries out the reaction 1-octadecanoyl-2-(5Z,8Z,11Z,14Z-eicosatetraenoyl)-sn-glycero-3-phosphate + H2O = 2-(5Z,8Z,11Z,14Z-eicosatetraenoyl)-sn-glycero-3-phosphate + octadecanoate + H(+). It catalyses the reaction a 1,2-diacyl-sn-glycero-3-phospho-L-serine + H2O = a 2-acyl-sn-glycero-3-phospho-L-serine + a fatty acid + H(+). The catalysed reaction is a 1,2-diacyl-sn-glycero-3-phosphocholine + H2O = a 2-acyl-sn-glycero-3-phosphocholine + a fatty acid + H(+). The enzyme catalyses 1,2-di-(9Z-octadecenoyl)-sn-glycero-3-phosphocholine + H2O = (9Z-octadecenoyl)-sn-glycero-3-phosphocholine + (9Z)-octadecenoate + H(+). It carries out the reaction a 1,2-diacyl-sn-glycero-3-phosphoethanolamine + H2O = a 2-acyl-sn-glycero-3-phosphoethanolamine + a fatty acid + H(+). It catalyses the reaction a 1,2-diacyl-sn-glycero-3-phospho-(1'-sn-glycerol) + H2O = 2-acyl-sn-glycero-3-phospho-(1'-sn-glycerol) + a fatty acid + H(+). The catalysed reaction is 1-hexadecanoyl-2-(9Z-octadecenoyl)-sn-glycero-3-phospho-(1'-sn-glycerol) + H2O = 2-(9Z-octadecenoyl)-sn-glycero-3-phospho-(1'-sn-glycerol) + hexadecanoate + H(+). The enzyme catalyses 1-acyl-2-(5Z,8Z,11Z,14Z-eicosatetraenoyl)-sn-glycero-3-phosphocholine + H2O = 2-(5Z,8Z,11Z,14Z)-eicosatetraenoyl-sn-glycero-3-phosphocholine + a fatty acid + H(+). It carries out the reaction 1-acyl-2-(5Z,8Z,11Z,14Z)-eicosatetraenoyl-sn-glycero-3-phosphoethanolamine + H2O = 2-(5Z,8Z,11Z,14Z)-eicosatetraenoyl-sn-glycero-3-phosphoethanolamine + a fatty acid + H(+). It functions in the pathway phospholipid metabolism; phosphatidylinositol metabolism. Phospholipase A1 (PLA1) that hydrolyzes ester bonds at the sn-1 position of glycerophospholipids producing a free fatty acid and a lysophospholipid. Prefers phosphatidate (1,2-diacyl-sn-glycero-3-phosphate, PA) as substrate in vitro, but can efficiently hydrolyze phosphatidylinositol (1,2-diacyl-sn-glycero-3-phospho-(1D-myo-inositol), PI), as well as a range of other glycerophospholipid substrates such as phosphatidylcholine (1,2-diacyl-sn-glycero-3-phosphocholine, PC), phosphatidylethanolamine (1,2-diacyl-sn-glycero-3-phosphoethanolamine, PE), phosphatidylserine (1,2-diacyl-sn-glycero-3-phospho-L-serine, PS) and phosphatidylglycerol (1,2-diacyl-sn-glycero-3-phospho-(1'-sn-glycerol), PG). Involved in the regulation of the endogenous content of polyunsaturated PI and PS lipids in the nervous system. Changes in these lipids extend to downstream metabolic products like PI phosphates PIP and PIP2, which play fundamental roles in cell biology. Regulates mitochondrial morphology. These dynamic changes may be due to PA hydrolysis at the mitochondrial surface. May play a regulatory role in spermatogenesis or sperm function. This chain is Phospholipase DDHD1, found in Mus musculus (Mouse).